We begin with the raw amino-acid sequence, 802 residues long: MRAVLSQKTTPLPRYLWPGHLSGPRRLTWSWCSDHRTPTCRELGSPHPTPCTGPARGWPRRGGGPCGFTSAGHVLCGYPLCLLSGPIQGCGTGLGDSSMAFLSRTSPVAAASFQSRQEARGSILLQSCQLPPQWLSTEAWTGEWKQPHGGALTSRSPGPVAPQRPCHLKGWQHRPTQHNAACKQGQAAAQTPPRPGPPSAPPPPPKEGHQEGLVELPASFRELLTFFCTNATIHGAIRLVCSRGNRLKTTSWGLLSLGALVALCWQLGLLFERHWHRPVLMAVSVHSERKLLPLVTLCDGNPRRPSPVLRHLELLDEFARENIDSLYNVNLSKGRAALSATVPRHEPPFHLDREIRLQRLSHSGSRVRVGFRLCNSTGGDCFYRGYTSGVAAVQDWYHFHYVDILALLPAAWEDSHGSQDGHFVLSCSYDGLDCQARQFRTFHHPTYGSCYTVDGVWTAQRPGITHGVGLVLRVEQQPHLPLLSTLAGIRVMVHGRNHTPFLGHHSFSVRPGTEATISIREDEVHRLGSPYGHCTAGGEGVEVELLHNTSYTRQACLVSCFQQLMVETCSCGYYLHPLPAGAEYCSSARHPAWGHCFYRLYQDLETHRLPCTSRCPRPCRESAFKLSTGTSRWPSAKSAGWTLATLGEQGLPHQSHRQRSSLAKINIVYQELNYRSVEEAPVYSVPQLLSAMGSLCSLWFGASVLSLLELLELLLDASALTLVLGGRRLRRAWFSWPRASPASGASSIKPEASQMPPPAGGTSDDPEPSGPHLPRVMLPGVLAGVSAEESWAGPQPLETLDT.

Over 1 to 250 (MRAVLSQKTT…CSRGNRLKTT (250 aa)) the chain is Cytoplasmic. The tract at residues 145–211 (KQPHGGALTS…PPPPKEGHQE (67 aa)) is disordered. Residues 166-176 (CHLKGWQHRPT) are compositionally biased toward basic residues. Residues 192–205 (PPRPGPPSAPPPPP) are compositionally biased toward pro residues. The helical transmembrane segment at 251-271 (SWGLLSLGALVALCWQLGLLF) threads the bilayer. Topologically, residues 272 to 694 (ERHWHRPVLM…VPQLLSAMGS (423 aa)) are extracellular. Residues asparagine 330 and asparagine 548 are each glycosylated (N-linked (GlcNAc...) asparagine). Residues 695–715 (LCSLWFGASVLSLLELLELLL) form a helical membrane-spanning segment. The Cytoplasmic segment spans residues 716–802 (DASALTLVLG…GPQPLETLDT (87 aa)). The interval 738–777 (RASPASGASSIKPEASQMPPPAGGTSDDPEPSGPHLPRVM) is disordered.

It belongs to the amiloride-sensitive sodium channel (TC 1.A.6) family. SCNN1D subfamily. As to quaternary structure, can form an alternative heterotrimeric epithelial sodium channel (ENaC), composed of a delta (SCNN1D), beta (SCNN1B), and gamma (SCNN1G) subunit, where the delta (SCNN1D) subunit replaces the alpha (SCNN1A) subunit. As to expression, not specifically expressed in epithelial cells.

The protein localises to the apical cell membrane. It catalyses the reaction Na(+)(in) = Na(+)(out). Its activity is regulated as follows. Originally identified and characterized by its inhibition by the diuretic drug amiloride. Potential alternative pore-forming subunit of the epithelial sodium channel (ENaC), capable of replacing the alpha/SCNN1A subunit, creating a more active channel with distinct properties. ENaC functions in epithelial tissues, where it facilitates the electrodiffusion of sodium ions from the extracellular fluid through the apical membrane of cells, with water following osmotically, regulating sodium balance and fluid homeostasis. This subunit could also function independently as a sodium channel or assemble into other tissue-specific heterotrimeric sodium channels. In terms of biological role, ENaC channels including this isoform exhibit greater conductance. The chain is Epithelial sodium channel subunit delta from Homo sapiens (Human).